Here is a 447-residue protein sequence, read N- to C-terminus: Gustatory receptor family protein 3 (447 aa).

Topologically, residues 1–69 (MTITASNTLE…HTHSSARNTM (69 aa)) are extracellular. Residues 70 to 90 (FKWPLTIYNYLTLAILTAATI) traverse the membrane as a helical segment. Residues 91-116 (RRISQIKQKSATNEEKDAAFHVLNPT) lie on the Cytoplasmic side of the membrane. Residues 117-137 (FVLTLCHALLMFSGLAAGFLL) form a helical membrane-spanning segment. The Extracellular segment spans residues 138–171 (LKLQKQREKMYHVLDQGLGRNRNEEHDSHHFKLN). A helical transmembrane segment spans residues 172–192 (KLFISISFSFAAALSFVQIAT). At 193-211 (KMRYLDLPDTPDLINRKIY) the chain is on the cytoplasmic side. The helical transmembrane segment at 212 to 232 (FVILEGYVIFIASSCISLVAI) threads the bilayer. At 233-292 (LFFQLCRILQFSIGQLIEEMVPKEKEECPLPEQSLQQIHDVQIHYQEISNAKLYIEQNFS) the chain is on the extracellular side. Residues 293–313 (FSLFYTYGCCIPLTCLLGYIA) traverse the membrane as a helical segment. Over 314 to 328 (FRNGIQADMAETFSV) the chain is Cytoplasmic. The helical transmembrane segment at 329–349 (AIWLTNTMLALMLFSIPAFMI) threads the bilayer. At 350–405 (AEEGDKLLTASFKMYHETLCEERDLLVLSQMSFLSFQMHATKLTLTAGNFFMMNRK) the chain is on the extracellular side. A helical transmembrane segment spans residues 406 to 426 (IMISLFSAIFTYFLILVQFDA). Over 427 to 447 (EKERAGECNNQSRVLIVQPPV) the chain is Cytoplasmic.

This sequence belongs to the insect chemoreceptor superfamily. Gustatory receptor (GR) family. Expressed in I2 pharyngeal neurons.

The protein resides in the membrane. Functionally, chemoreceptor involved in light-induced avoidance behavior. Probably acts as a molecular sensor in I2 pharyngeal neurons, required for the inhibition of feeding in response to light and hydrogen peroxide. Involved in circadian rhythms, probably by acting as a light sensor. In contrast to lite-1, does not act as a photoreceptor. The protein is Gustatory receptor family protein 3 of Caenorhabditis elegans.